Here is a 467-residue protein sequence, read N- to C-terminus: Neurexin-1-beta (467 aa).

The signal sequence occupies residues 1–45 (MYQRMLRCGAELGSPGGGGGGAGGRLALLWIVPLTLSGLLGVAWG). The Extracellular portion of the chain corresponds to 46–391 (ASSLGAHHIH…EVIRESSSTT (346 aa)). One can recognise a Laminin G-like domain in the interval 86–284 (YIFSKGGGQI…DANIAIVGNV (199 aa)). Positions 136 and 153 each coordinate Ca(2+). Asn183 carries an N-linked (GlcNAc...) asparagine glycan. Positions 200–229 (GNNDNERLAIARQRIPYRLGRVVDEWLLDK) are essential for interaction with CBLN1; modulates interaction affinity with NLGN1, NLGN2 and NLGN3; prevents interaction with DAG1/alpha-dystroglycan; modulates interaction with alpha-latrotoxin. 2 residues coordinate Ca(2+): Ile235 and Asn237. Residues 318–380 (LATSTARRGN…AGGREPYPGS (63 aa)) are disordered. Polar residues predominate over residues 324-339 (RRGNSPTKEPVSQTTD). Residue Ser345 is glycosylated (O-linked (Xyl...) (heparan sulfate) serine). A helical membrane pass occupies residues 392–412 (GMVVGIVAAAALCILILLYAM). Topologically, residues 413-467 (YKYRNRDEGSYHVDESRNYISNSAQSNGAVVKEKQPSSAKSANKNKKNKDKEYYV) are cytoplasmic. A disordered region spans residues 434–467 (NSAQSNGAVVKEKQPSSAKSANKNKKNKDKEYYV). A phosphoserine mark is found at Ser449, Ser450, and Ser453.

The protein belongs to the neurexin family. The cytoplasmic C-terminal region binds to CASK. Binds NLGN1, NLGN2 and NLGN3, DAG1 (alpha-dystroglycan) and alpha-latrotoxin. Binding to neuroligins is calcium-dependent, and the binding preference ranks as follow: NLGN1 &gt; NLGN4 &gt;&gt; NLGN3 &gt; NLGN2. Interacts with CBLN2 and more weakly with CBLN4. Interacts with CBLN1; interaction is CBLN1 hexamer form-dependent; CBLN1-binding is calcium-independent; isoform 1b does not interact with CBLN1. Interacts with CLSTN3. In terms of processing, O-glycosylated; contains heparan sulfate. Heparan sulfate attachment is required for synapse development by mediating interactions with neuroligins.

Its subcellular location is the presynaptic cell membrane. Functionally, neuronal cell surface protein involved in cell recognition and cell adhesion by forming intracellular junctions through binding to neuroligins. Plays a role in formation of synaptic junctions. Functions as part of a trans-synaptic complex by binding to cerebellins and postsynaptic GRID1. This interaction helps regulate the activity of NMDA and AMPA receptors at hippocampal synapses without affecting synapse formation. NRXN1B-CBLN2-GRID1 complex transduce presynaptic signals into postsynaptic NMDAR response. This Bos taurus (Bovine) protein is Neurexin-1-beta.